The chain runs to 211 residues: Ribosomal RNA large subunit methyltransferase E (211 aa).

G55, W57, D75, D93, and D117 together coordinate S-adenosyl-L-methionine. Residue K157 is the Proton acceptor of the active site.

This sequence belongs to the class I-like SAM-binding methyltransferase superfamily. RNA methyltransferase RlmE family.

It is found in the cytoplasm. It catalyses the reaction uridine(2552) in 23S rRNA + S-adenosyl-L-methionine = 2'-O-methyluridine(2552) in 23S rRNA + S-adenosyl-L-homocysteine + H(+). Functionally, specifically methylates the uridine in position 2552 of 23S rRNA at the 2'-O position of the ribose in the fully assembled 50S ribosomal subunit. This Methanothermobacter thermautotrophicus (strain ATCC 29096 / DSM 1053 / JCM 10044 / NBRC 100330 / Delta H) (Methanobacterium thermoautotrophicum) protein is Ribosomal RNA large subunit methyltransferase E.